The following is a 195-amino-acid chain: Rho-related protein racB (195 aa).

10–17 contributes to the GTP binding site; the sequence is GDGAVGKT. The Effector region motif lies at 32–40; it reads YVPTVFDNY. GTP-binding positions include 57-61 and 115-118; these read DTAGQ and TKCD. Cysteine methyl ester is present on cysteine 192. Cysteine 192 carries the S-geranylgeranyl cysteine lipid modification. Residues 193 to 195 constitute a propeptide, removed in mature form; that stretch reads SIL.

Belongs to the small GTPase superfamily. Rho family. In terms of assembly, interacts with pakB.

Its subcellular location is the cell membrane. This Dictyostelium discoideum (Social amoeba) protein is Rho-related protein racB (racB).